We begin with the raw amino-acid sequence, 708 residues long: Polyribonucleotide nucleotidyltransferase (708 aa).

Residues Asp-488 and Asp-494 each coordinate Mg(2+). Positions 555-615 (PIIKVTKVDP…ENVDKAIELI (61 aa)) constitute a KH domain. In terms of domain architecture, S1 motif spans 625–692 (GEVLEGKVTR…DLGRLQFKRV (68 aa)).

It belongs to the polyribonucleotide nucleotidyltransferase family. It depends on Mg(2+) as a cofactor.

The protein resides in the cytoplasm. The enzyme catalyses RNA(n+1) + phosphate = RNA(n) + a ribonucleoside 5'-diphosphate. Its function is as follows. Involved in mRNA degradation. Catalyzes the phosphorolysis of single-stranded polyribonucleotides processively in the 3'- to 5'-direction. In Thermotoga petrophila (strain ATCC BAA-488 / DSM 13995 / JCM 10881 / RKU-1), this protein is Polyribonucleotide nucleotidyltransferase.